The following is a 91-amino-acid chain: Small ribosomal subunit protein uS19 (91 aa).

The protein belongs to the universal ribosomal protein uS19 family.

Its function is as follows. Protein S19 forms a complex with S13 that binds strongly to the 16S ribosomal RNA. The protein is Small ribosomal subunit protein uS19 of Verminephrobacter eiseniae (strain EF01-2).